A 621-amino-acid polypeptide reads, in one-letter code: Type 2 DNA topoisomerase 6 subunit B (621 aa).

ATP-binding positions include asparagine 48, aspartate 80, 101 to 102 (SR), 111 to 118 (GQQGIGIS), and lysine 435.

This sequence belongs to the TOP6B family. Homodimer. Heterotetramer of two Top6A and two Top6B chains.

The catalysed reaction is ATP-dependent breakage, passage and rejoining of double-stranded DNA.. Functionally, relaxes both positive and negative superturns and exhibits a strong decatenase activity. The chain is Type 2 DNA topoisomerase 6 subunit B from Methanosarcina acetivorans (strain ATCC 35395 / DSM 2834 / JCM 12185 / C2A).